A 121-amino-acid polypeptide reads, in one-letter code: Flagellar protein FliT (121 aa).

The segment at 1–50 is required for homodimerization; the sequence is MNHAPHLYFAWQQLVDKSQLMLRLATEEQWDELIASEMAYVNAVQEIAHL. The interval 60–98 is fliD binding; it reads MQEQLRPMLRLILDNESKVKQLLQIRMDELAKLVGQSSV.

Belongs to the FliT family. Homodimer. Interacts with FliD and FlhC.

The protein resides in the cytoplasm. The protein localises to the cytosol. In terms of biological role, dual-function protein that regulates the transcription of class 2 flagellar operons and that also acts as an export chaperone for the filament-capping protein FliD. As a transcriptional regulator, acts as an anti-FlhDC factor; it directly binds FlhC, thus inhibiting the binding of the FlhC/FlhD complex to class 2 promoters, resulting in decreased expression of class 2 flagellar operons. As a chaperone, effects FliD transition to the membrane by preventing its premature polymerization, and by directing it to the export apparatus. This chain is Flagellar protein FliT, found in Shigella sonnei (strain Ss046).